Reading from the N-terminus, the 556-residue chain is Urocanate hydratase (556 aa).

NAD(+) contacts are provided by residues 52–53 (GG), Q130, 176–178 (GMG), E196, R201, 242–243 (NA), 263–267 (QTSAH), 273–274 (YL), and Y322. C410 is a catalytic residue. Residue G492 participates in NAD(+) binding.

Belongs to the urocanase family. The cofactor is NAD(+).

It localises to the cytoplasm. It carries out the reaction 4-imidazolone-5-propanoate = trans-urocanate + H2O. Its pathway is amino-acid degradation; L-histidine degradation into L-glutamate; N-formimidoyl-L-glutamate from L-histidine: step 2/3. In terms of biological role, catalyzes the conversion of urocanate to 4-imidazolone-5-propionate. This Shewanella piezotolerans (strain WP3 / JCM 13877) protein is Urocanate hydratase.